The following is a 229-amino-acid chain: Aldehyde oxidoreductase iron-sulfur-binding subunit PaoA (229 aa).

Residues 1–21 (MSNQGEYPEDNRVGKHEPHDL) are disordered. Residues 1-53 (MSNQGEYPEDNRVGKHEPHDLSLTRRDLIKVSAATAAAAVVYPHSTLAASVPA) constitute a signal peptide (tat-type signal). Over residues 9 to 21 (EDNRVGKHEPHDL) the composition is skewed to basic and acidic residues. Residues 61-137 (MPLTLKVNGK…GAEITTIEGL (77 aa)) form the 2Fe-2S ferredoxin-type domain. [2Fe-2S] cluster contacts are provided by cysteine 99, cysteine 104, glycine 105, cysteine 107, cysteine 119, cysteine 158, cysteine 161, cysteine 208, and cysteine 210.

As to quaternary structure, heterotrimer composed of PaoA, PaoB and PaoC. It depends on [2Fe-2S] cluster as a cofactor. Post-translationally, exported by the Tat system. The position of the signal peptide cleavage has not been experimentally proven.

It is found in the periplasm. The catalysed reaction is an aldehyde + A + H2O = a carboxylate + AH2 + H(+). Its function is as follows. Oxidizes aldehydes to the corresponding carboxylic acids with a preference for aromatic aldehydes. It might play a role in the detoxification of aldehydes to avoid cell damage. This Escherichia coli O157:H7 protein is Aldehyde oxidoreductase iron-sulfur-binding subunit PaoA.